A 253-amino-acid chain; its full sequence is Ribonuclease PH (253 aa).

Residues Arg86 and 124–126 (GTR) each bind phosphate.

It belongs to the RNase PH family. In terms of assembly, homohexameric ring arranged as a trimer of dimers.

It carries out the reaction tRNA(n+1) + phosphate = tRNA(n) + a ribonucleoside 5'-diphosphate. Phosphorolytic 3'-5' exoribonuclease that plays an important role in tRNA 3'-end maturation. Removes nucleotide residues following the 3'-CCA terminus of tRNAs; can also add nucleotides to the ends of RNA molecules by using nucleoside diphosphates as substrates, but this may not be physiologically important. Probably plays a role in initiation of 16S rRNA degradation (leading to ribosome degradation) during starvation. The sequence is that of Ribonuclease PH from Brevibacillus brevis (strain 47 / JCM 6285 / NBRC 100599).